The chain runs to 443 residues: Thymidine phosphorylase (443 aa).

Belongs to the thymidine/pyrimidine-nucleoside phosphorylase family. Homodimer.

It catalyses the reaction thymidine + phosphate = 2-deoxy-alpha-D-ribose 1-phosphate + thymine. The protein operates within pyrimidine metabolism; dTMP biosynthesis via salvage pathway; dTMP from thymine: step 1/2. In terms of biological role, the enzymes which catalyze the reversible phosphorolysis of pyrimidine nucleosides are involved in the degradation of these compounds and in their utilization as carbon and energy sources, or in the rescue of pyrimidine bases for nucleotide synthesis. This is Thymidine phosphorylase from Shewanella putrefaciens (strain CN-32 / ATCC BAA-453).